The sequence spans 468 residues: Putative FBD-associated F-box protein At5g22720 (468 aa).

The 47-residue stretch at 22 to 68 folds into the F-box domain; the sequence is EDLISQLPDSLITQILFYLQTKKAVTTSVLSKRWRSLWLSTPGLVLI. Residues 375 to 433 enclose the FBD domain; the sequence is ELRLSFVPRCLLSSLEFVEIKGCSRSNMERVKYVGEPIETKLARYFVENSTILKKLVLP.

The protein is Putative FBD-associated F-box protein At5g22720 of Arabidopsis thaliana (Mouse-ear cress).